The chain runs to 345 residues: Probable S-adenosylmethionine carrier 2, chloroplastic (345 aa).

A chloroplast-targeting transit peptide spans 1–31 (MTKALSGFCCSLSLSTLVRSSSSHMDSDIVS). Solcar repeat units lie at residues 76-148 (RVLY…TKQK), 157-239 (LSAV…LRIG), and 252-334 (ENAM…TKQI). Transmembrane regions (helical) follow at residues 82–102 (LITGGLAGVVVEAALYPIDTI), 121–141 (YSGLGGNLVGVLPASALFFGV), 156–176 (NLSAVAHLAAGALGGAVSSIV), 254–274 (AMIGAFAGAVTGVLTTPLDVI), and 309–329 (GMGPRVLWIGIGGSIFFGVLE).

This sequence belongs to the mitochondrial carrier (TC 2.A.29) family. Expressed at low levels in seedlings, leaves, flowers, stems and roots.

It is found in the plastid. The protein localises to the chloroplast membrane. Its function is as follows. Probable S-adenosylmethionine (SAM) transporter able to catalyze both uniport and exchange reactions through membranes. This is Probable S-adenosylmethionine carrier 2, chloroplastic (SAMC2) from Arabidopsis thaliana (Mouse-ear cress).